A 446-amino-acid chain; its full sequence is MSSKQQAQGRNVVVIGTQWGDEGKGKVVDWLTDHAQAVVRFQGGHNAGHTLIIGDKKTILRLIPSGIMHKDVICYIGNGVVLSPEALFKEIGELEAAGLDVQSRLKISEATTLILPYHVAIDHAREKKRGEAKIGTTGRGIGPAYEDKVARRALRVQDLFYPEKFAEQLRENLEYHNFMLTNYYGAEPVNYEKTLAEAMSYAERLKPMVVDVSSALYAAEQAGQNLLFEGAQGTLLDIDHGTYPYVTSSNCVAGNAAAGSGVGPDSLQYILGITKAYCTRVGAGPFPSELYDHDNPARQDPIGVRLAEVGKEFGSVTGRPRRTGWLDAAALKRSIQINGLSGLCITKLDVLDGLETIRLCVGYNLDGKKLDVLPRGAESVARCEPIYEDFPGWKGTTFGIREWEKLPVEAQNFLRRIEEVAGKPIAMVSTGPERDETILLQHPFQD.

Residues 20-26 (GDEGKGK) and 48-50 (GHT) contribute to the GTP site. Asp-21 (proton acceptor) is an active-site residue. Positions 21 and 48 each coordinate Mg(2+). IMP-binding positions include 21-24 (DEGK), 46-49 (NAGH), Thr-137, Arg-151, Gln-232, Thr-247, and Arg-319. His-49 serves as the catalytic Proton donor. 315 to 321 (SVTGRPR) is a substrate binding site. GTP-binding positions include Arg-321, 347-349 (KLD), and 429-431 (STG).

This sequence belongs to the adenylosuccinate synthetase family. In terms of assembly, homodimer. It depends on Mg(2+) as a cofactor.

It localises to the cytoplasm. The enzyme catalyses IMP + L-aspartate + GTP = N(6)-(1,2-dicarboxyethyl)-AMP + GDP + phosphate + 2 H(+). It participates in purine metabolism; AMP biosynthesis via de novo pathway; AMP from IMP: step 1/2. Plays an important role in the de novo pathway of purine nucleotide biosynthesis. Catalyzes the first committed step in the biosynthesis of AMP from IMP. The sequence is that of Adenylosuccinate synthetase from Polynucleobacter asymbioticus (strain DSM 18221 / CIP 109841 / QLW-P1DMWA-1) (Polynucleobacter necessarius subsp. asymbioticus).